We begin with the raw amino-acid sequence, 258 residues long: UDP-N-acetylenolpyruvoylglucosamine reductase (258 aa).

R142 is an active-site residue. S184 serves as the catalytic Proton donor. Residue E254 is part of the active site.

Belongs to the MurB family. FAD serves as cofactor.

The protein resides in the cytoplasm. The catalysed reaction is UDP-N-acetyl-alpha-D-muramate + NADP(+) = UDP-N-acetyl-3-O-(1-carboxyvinyl)-alpha-D-glucosamine + NADPH + H(+). It functions in the pathway cell wall biogenesis; peptidoglycan biosynthesis. Functionally, cell wall formation. The polypeptide is UDP-N-acetylenolpyruvoylglucosamine reductase (Campylobacter jejuni subsp. jejuni serotype O:2 (strain ATCC 700819 / NCTC 11168)).